Consider the following 476-residue polypeptide: Beta-xylosidase (476 aa).

Glutamate 188 acts as the Proton donor in catalysis. Glutamate 292 functions as the Nucleophile in the catalytic mechanism. N-linked (GlcNAc...) asparagine glycosylation is present at asparagine 468.

Belongs to the glycosyl hydrolase 5 (cellulase A) family.

The protein resides in the secreted. It carries out the reaction Hydrolysis of (1-&gt;4)-beta-D-xylans, to remove successive D-xylose residues from the non-reducing termini.. Catalyzes the hydrolysis of xylo-oligomers to xylose units and plays an important role in xylan degradation. Can also perform the transglycosylation of xylose and alcohol. Has no endoglucanase activity. This is Beta-xylosidase from Phanerodontia chrysosporium (White-rot fungus).